Here is a 179-residue protein sequence, read N- to C-terminus: ATP-dependent protease subunit HslV (179 aa).

The active site involves Thr6. The Na(+) site is built by Ser162, Cys165, and Thr168.

Belongs to the peptidase T1B family. HslV subfamily. As to quaternary structure, a double ring-shaped homohexamer of HslV is capped on each side by a ring-shaped HslU homohexamer. The assembly of the HslU/HslV complex is dependent on binding of ATP.

It localises to the cytoplasm. It catalyses the reaction ATP-dependent cleavage of peptide bonds with broad specificity.. Its activity is regulated as follows. Allosterically activated by HslU binding. Its function is as follows. Protease subunit of a proteasome-like degradation complex believed to be a general protein degrading machinery. This is ATP-dependent protease subunit HslV from Maridesulfovibrio salexigens (strain ATCC 14822 / DSM 2638 / NCIMB 8403 / VKM B-1763) (Desulfovibrio salexigens).